Consider the following 385-residue polypeptide: Mannitol-1-phosphate 5-dehydrogenase (385 aa).

An NAD(+)-binding site is contributed by 3–14 (ALQFGAGNIGRG).

It belongs to the mannitol dehydrogenase family.

It catalyses the reaction D-mannitol 1-phosphate + NAD(+) = beta-D-fructose 6-phosphate + NADH + H(+). The sequence is that of Mannitol-1-phosphate 5-dehydrogenase (mtlD) from Buchnera aphidicola subsp. Acyrthosiphon pisum (strain APS) (Acyrthosiphon pisum symbiotic bacterium).